A 335-amino-acid polypeptide reads, in one-letter code: Urokinase plasminogen activator surface receptor (335 aa).

Positions 1–22 are cleaved as a signal peptide; the sequence is MGHPLLLPLLLLLHTCVPASWG. UPAR/Ly6 domains lie at 23-114, 115-213, and 214-305; these read LRCM…RSRY, LECI…PQNG, and HQCY…YRKG. Disulfide bonds link Cys25–Cys46, Cys28–Cys34, and Cys39–Cys67. Residue Asn74 is glycosylated (N-linked (GlcNAc...) asparagine). 11 disulfides stabilise this stretch: Cys93–Cys98, Cys117–Cys144, Cys120–Cys127, Cys137–Cys169, Cys175–Cys192, Cys193–Cys198, Cys216–Cys244, Cys219–Cys227, Cys237–Cys263, Cys269–Cys287, and Cys288–Cys293. N-linked (GlcNAc...) asparagine glycosylation is found at Asn184, Asn194, Asn222, Asn255, and Asn284. Gly305 carries GPI-anchor amidated glycine lipidation. A propeptide spans 306–335 (removed in mature form); it reads AAPQPGPAHLSLTITLLMTARLWGGTLLWT.

In terms of assembly, monomer. Interacts (via the UPAR/Ly6 domains) with SRPX2. Interacts with MRC2. Interacts with FAP (seprase); the interaction occurs at the cell surface of invadopodia membrane. Interacts with SORL1 (via N-terminal ectodomain); this interaction decreases PLAUR internalization. The ternary complex composed of PLAUR-PLAU-SERPINE1 also interacts with SORL1.

It is found in the cell membrane. The protein resides in the cell projection. It localises to the invadopodium membrane. Acts as a receptor for urokinase plasminogen activator. Plays a role in localizing and promoting plasmin formation. Mediates the proteolysis-independent signal transduction activation effects of U-PA. It is subject to negative-feedback regulation by U-PA which cleaves it into an inactive form. The chain is Urokinase plasminogen activator surface receptor (PLAUR) from Macaca fascicularis (Crab-eating macaque).